The following is a 224-amino-acid chain: Cysteine S-methyltransferase NleE (224 aa).

An interaction with host proteins TAB2, TAB3 and ZRANB3 region spans residues Gly-49–Arg-52. Ala-92, Ser-98, Arg-107, Gln-111, Tyr-204, and Glu-208 together coordinate S-adenosyl-L-methionine.

Belongs to the NleE/OspZ family. As to quaternary structure, monomer.

It localises to the secreted. Its subcellular location is the host nucleus. It catalyses the reaction L-cysteinyl-[protein] + S-adenosyl-L-methionine = S-methyl-L-cysteinyl-[protein] + S-adenosyl-L-homocysteine + H(+). Cysteine methyltransferase effector that inhibits host cell NF-kappa-B activation by preventing nuclear translocation of host protein RELA/p65. Acts by mediating cysteine methylation of host proteins TAB2 and TAB3: methylation of a conserved cysteine residue of the RanBP2-type zinc finger (NZF) of TAB2 and TAB3 disrupts zinc-binding, thereby inactivating the ubiquitin chain-binding activity of TAB2 and TAB3, leading to NF-kappa-B inactivation. Also mediates cysteine methylation of host protein ZRANB3, inactivating its ability to bind ubiquitin chains. The sequence is that of Cysteine S-methyltransferase NleE from Escherichia coli O127:H6 (strain E2348/69 / EPEC).